Here is a 248-residue protein sequence, read N- to C-terminus: Uridylate kinase (248 aa).

11–14 (KISG) is a binding site for ATP. UMP is bound at residue G53. 2 residues coordinate ATP: G54 and R58. UMP is bound by residues D74 and 135–142 (AGSPYLTT). ATP contacts are provided by T162, Y169, and D172.

This sequence belongs to the UMP kinase family. Homohexamer.

It is found in the cytoplasm. It catalyses the reaction UMP + ATP = UDP + ADP. The protein operates within pyrimidine metabolism; CTP biosynthesis via de novo pathway; UDP from UMP (UMPK route): step 1/1. Inhibited by UTP. Functionally, catalyzes the reversible phosphorylation of UMP to UDP. This is Uridylate kinase from Chlamydia pneumoniae (Chlamydophila pneumoniae).